We begin with the raw amino-acid sequence, 506 residues long: Bifunctional purine biosynthesis protein PurH (506 aa).

One can recognise an MGS-like domain in the interval 1-146; that stretch reads MARLALLSVS…KNFAHLTVLC (146 aa).

The protein belongs to the PurH family.

It carries out the reaction (6R)-10-formyltetrahydrofolate + 5-amino-1-(5-phospho-beta-D-ribosyl)imidazole-4-carboxamide = 5-formamido-1-(5-phospho-D-ribosyl)imidazole-4-carboxamide + (6S)-5,6,7,8-tetrahydrofolate. The catalysed reaction is IMP + H2O = 5-formamido-1-(5-phospho-D-ribosyl)imidazole-4-carboxamide. Its pathway is purine metabolism; IMP biosynthesis via de novo pathway; 5-formamido-1-(5-phospho-D-ribosyl)imidazole-4-carboxamide from 5-amino-1-(5-phospho-D-ribosyl)imidazole-4-carboxamide (10-formyl THF route): step 1/1. The protein operates within purine metabolism; IMP biosynthesis via de novo pathway; IMP from 5-formamido-1-(5-phospho-D-ribosyl)imidazole-4-carboxamide: step 1/1. The sequence is that of Bifunctional purine biosynthesis protein PurH from Nostoc sp. (strain PCC 7120 / SAG 25.82 / UTEX 2576).